Here is a 328-residue protein sequence, read N- to C-terminus: tRNA uridine(34) hydroxylase (328 aa).

One can recognise a Rhodanese domain in the interval 122–218 (QENRCLVLDV…YGLKMGTGKW (97 aa)). The active-site Cysteine persulfide intermediate is the C178.

This sequence belongs to the TrhO family.

The catalysed reaction is uridine(34) in tRNA + AH2 + O2 = 5-hydroxyuridine(34) in tRNA + A + H2O. In terms of biological role, catalyzes oxygen-dependent 5-hydroxyuridine (ho5U) modification at position 34 in tRNAs. The chain is tRNA uridine(34) hydroxylase from Chlamydia muridarum (strain MoPn / Nigg).